Consider the following 484-residue polypeptide: tRNA sulfurtransferase (484 aa).

The region spanning 61-166 is the THUMP domain; it reads PHLIELLQCI…DKLLFIQARH (106 aa). ATP-binding positions include 183 to 184, Lys265, Gly287, and Gln296; that span reads LI. A disulfide bridge connects residues Cys344 and Cys456. The region spanning 404–483 is the Rhodanese domain; it reads LGENDVILDI…FNNVQVFVKA (80 aa). The active-site Cysteine persulfide intermediate is the Cys456.

This sequence belongs to the ThiI family.

Its subcellular location is the cytoplasm. The catalysed reaction is [ThiI sulfur-carrier protein]-S-sulfanyl-L-cysteine + a uridine in tRNA + 2 reduced [2Fe-2S]-[ferredoxin] + ATP + H(+) = [ThiI sulfur-carrier protein]-L-cysteine + a 4-thiouridine in tRNA + 2 oxidized [2Fe-2S]-[ferredoxin] + AMP + diphosphate. The enzyme catalyses [ThiS sulfur-carrier protein]-C-terminal Gly-Gly-AMP + S-sulfanyl-L-cysteinyl-[cysteine desulfurase] + AH2 = [ThiS sulfur-carrier protein]-C-terminal-Gly-aminoethanethioate + L-cysteinyl-[cysteine desulfurase] + A + AMP + 2 H(+). It functions in the pathway cofactor biosynthesis; thiamine diphosphate biosynthesis. Its function is as follows. Catalyzes the ATP-dependent transfer of a sulfur to tRNA to produce 4-thiouridine in position 8 of tRNAs, which functions as a near-UV photosensor. Also catalyzes the transfer of sulfur to the sulfur carrier protein ThiS, forming ThiS-thiocarboxylate. This is a step in the synthesis of thiazole, in the thiamine biosynthesis pathway. The sulfur is donated as persulfide by IscS. This chain is tRNA sulfurtransferase, found in Actinobacillus succinogenes (strain ATCC 55618 / DSM 22257 / CCUG 43843 / 130Z).